Reading from the N-terminus, the 121-residue chain is ATP synthase epsilon chain (121 aa).

The protein belongs to the ATPase epsilon chain family. In terms of assembly, F-type ATPases have 2 components, CF(1) - the catalytic core - and CF(0) - the membrane proton channel. CF(1) has five subunits: alpha(3), beta(3), gamma(1), delta(1), epsilon(1). CF(0) has three main subunits: a, b and c.

It localises to the cell membrane. Produces ATP from ADP in the presence of a proton gradient across the membrane. This is ATP synthase epsilon chain from Mycobacterium leprae (strain Br4923).